Consider the following 435-residue polypeptide: UDP-N-acetylmuramoylalanine--D-glutamate ligase (435 aa).

114-120 (GSNGKST) lines the ATP pocket.

The protein belongs to the MurCDEF family.

It is found in the cytoplasm. The enzyme catalyses UDP-N-acetyl-alpha-D-muramoyl-L-alanine + D-glutamate + ATP = UDP-N-acetyl-alpha-D-muramoyl-L-alanyl-D-glutamate + ADP + phosphate + H(+). The protein operates within cell wall biogenesis; peptidoglycan biosynthesis. Functionally, cell wall formation. Catalyzes the addition of glutamate to the nucleotide precursor UDP-N-acetylmuramoyl-L-alanine (UMA). The sequence is that of UDP-N-acetylmuramoylalanine--D-glutamate ligase from Haemophilus ducreyi (strain 35000HP / ATCC 700724).